We begin with the raw amino-acid sequence, 455 residues long: Mycosin-4 (455 aa).

An N-terminal signal peptide occupies residues 1 to 25; it reads MTTSRTLRLLVVSALATLSGLGTPV. The Peptidase S8 domain occupies 74 to 384; it reads SAQLADLDQV…NGTVDALAAV (311 aa). Residues D98, H129, and S329 each act as charge relay system in the active site. Positions 389–417 are disordered; the sequence is IPQAGTATSDPAPVAVPVPRRSTPGPSDR. The span at 394–412 shows a compositional bias: low complexity; sequence TATSDPAPVAVPVPRRSTP. Residues 432-452 traverse the membrane as a helical segment; that stretch reads LALMATLATASRRLRPGRNGI.

The protein belongs to the peptidase S8 family.

Its subcellular location is the cell membrane. The chain is Mycosin-4 from Mycobacterium tuberculosis (strain ATCC 25618 / H37Rv).